The sequence spans 102 residues: Large ribosomal subunit protein bL21 (102 aa).

This sequence belongs to the bacterial ribosomal protein bL21 family. Part of the 50S ribosomal subunit. Contacts protein L20.

This protein binds to 23S rRNA in the presence of protein L20. This Solidesulfovibrio magneticus (strain ATCC 700980 / DSM 13731 / RS-1) (Desulfovibrio magneticus) protein is Large ribosomal subunit protein bL21.